The chain runs to 401 residues: MAKVLCVLYDDPVDGYPKTYARDDLPKIDHYPGGQTLPTPKAIDFTPGQLLGSVSGELGLRKYLESNGHTLVVTSDKDGPDSVFERELVDADVVISQPFWPAYLTPERIAKAKNLKLALTAGIGSDHVDLQSAIDRNVTVAEVTYCNSISVAEHVVMMILSLVRNYLPSHEWARKGGWNIADCVSHAYDLEAMHVGTVAAGRIGLAVLRRLAPFDVHLHYTDRHRLPESVEKELNLTWHATREDMYPVCDVVTLNCPLHPETEHMINDETLKLFKRGAYIVNTARGKLCDRDAVARALESGRLAGYAGDVWFPQPAPKDHPWRTMPYNGMTPHISGTTLTAQARYAAGTREILECFFEGRPIRDEYLIVQGGALAGTGAHSYSKGNATGGSEEAAKFKKAV.

Substrate contacts are provided by Ile123 and Asn147. NAD(+) is bound by residues Ser148, 202–203 (RI), Asp222, 257–261 (PLHPE), Thr283, Asp309, 333–336 (HISG), and Ser381.

It belongs to the D-isomer specific 2-hydroxyacid dehydrogenase family. FDH subfamily. As to quaternary structure, homodimer.

It localises to the cytoplasm. It catalyses the reaction formate + NAD(+) = CO2 + NADH. Catalyzes the NAD(+)-dependent oxidation of formate to carbon dioxide. Formate oxidation is the final step in the methanol oxidation pathway in methylotrophic microorganisms. Has a role in the detoxification of exogenous formate in non-methylotrophic organisms. The protein is Formate dehydrogenase of Pseudomonas sp. (strain 101) (Achromobacter parvulus T1).